We begin with the raw amino-acid sequence, 614 residues long: Zinc metalloproteinase-disintegrin-like protein F1 (614 aa).

A signal peptide spans 1-20; it reads MLQVLLVTICLAVFPYQGSS. Positions 21–192 are excised as a propeptide; sequence IILESGNVND…IKASQFILTP (172 aa). A Cys-switch; controls maturation motif is present at residues 167–173; that stretch reads PKKCGVT. E193 carries the post-translational modification Pyrrolidone carboxylic acid (Glu). Positions 202 to 398 constitute a Peptidase M12B domain; that stretch reads KYIKLAIVVD…HTPRCILNEP (197 aa). Residue N221 is glycosylated (N-linked (GlcNAc...) asparagine). Cystine bridges form between C313/C393, C353/C377, and C355/C360. A Zn(2+)-binding site is contributed by H338. The Metal-binding signature appears at 338–349; sequence HELGHNLGINHD. E339 functions as the Proton acceptor in the catalytic mechanism. 2 residues coordinate Zn(2+): H342 and H348. In terms of domain architecture, Disintegrin spans 406–492; the sequence is PAVCGNYVVE…ECPMDHIQKN (87 aa). The Ca(2+) site is built by V408, N411, E415, E418, and D421. 14 disulfides stabilise this stretch: C409–C438, C420–C433, C422–C428, C432–C455, C446–C452, C451–C477, C464–C484, C471–C503, C496–C508, C515–C565, C530–C575, C543–C553, C560–C601, and C595–C607. Residues 470-472 carry the D/ECD-tripeptide motif; it reads ECD. Positions 472, 475, and 487 each coordinate Ca(2+). N534 carries N-linked (GlcNAc...) asparagine glycosylation.

It belongs to the venom metalloproteinase (M12B) family. P-III subfamily. P-IIIa sub-subfamily. Monomer. The cofactor is Zn(2+). N-glycosylated. In terms of processing, the N-terminus is blocked. Expressed by the venom gland (at protein level). Expressed by the venom gland.

The protein localises to the secreted. Its activity is regulated as follows. The alpha-fibrinogenase activity is inhibited by EDTA, but not by pefabloc. Its function is as follows. Zinc metalloprotease that has fibrinogenolytic activity. Does not have hemorrhagic activity in rats. Cleaves insulin B chain at '38-Ala-|-Leu-39' and '40-Tyr-|-Leu-41' bonds. Hydrolyzes only partially and weakly isolated extracellular matrix (ECM) bovine fibronectin and basal membrane (BM) protein human collagen IV in vitro. Murine laminin is not hydrolyzed, neither isolated nor in a solubilized BM preparation. Nidogen is hydrolyzed at '350-Ser-|-Phe-351' bond in a solubilized BM preparation. Hydrolyzes plasma proteins involved in blood coagulation in vitro. Has alpha-fibrinogenase activity cleaving human fibrinogen alpha chain at '432-Lys-|-Leu-433' bond, but does not cleave beta or gamma chains. Does not cleave fibrin. Hydrolyzes only partially bovine prothrombin at '200-Ser-|-Gly-201' bond, factor X (FX) heavy chain, and very slowly, FX light chain and plasminogen in vitro, without activating any of them. Has no effect in plasma thrombin generation. Does not inhibit platelet aggregation induced by collagen in vitro. May have a delayed pathological action as an anticoagulant in envenomed patients after they received serotherapy as it is not recognized by the venom antiserum. The polypeptide is Zinc metalloproteinase-disintegrin-like protein F1 (Vipera ammodytes ammodytes (Western sand viper)).